Consider the following 226-residue polypeptide: MGIRAIVVDTAGTTTDLNFIQDVLFPYSVKALPDFLEQNQHNVLVENCICDTKDIALEPEADLARVTEILQQWVNEDRKATPLKTLQGLIWKQGYAHGEFKGHIFPDFIEAVKRFSTQNLRIYSFSSGSVDAQKLLFSHSDGGDLTEMFNGHFDTRTGNKLDKQAYCNILNTISLSPKQVLFVSDVIEELKAADAAGMMTCQMVRDSKQRTGDFRKISSFDELQIE.

It belongs to the HAD-like hydrolase superfamily. MasA/MtnC family. In terms of assembly, monomer. Mg(2+) serves as cofactor.

The catalysed reaction is 5-methylsulfanyl-2,3-dioxopentyl phosphate + H2O = 1,2-dihydroxy-5-(methylsulfanyl)pent-1-en-3-one + phosphate. Its pathway is amino-acid biosynthesis; L-methionine biosynthesis via salvage pathway; L-methionine from S-methyl-5-thio-alpha-D-ribose 1-phosphate: step 3/6. It participates in amino-acid biosynthesis; L-methionine biosynthesis via salvage pathway; L-methionine from S-methyl-5-thio-alpha-D-ribose 1-phosphate: step 4/6. In terms of biological role, bifunctional enzyme that catalyzes the enolization of 2,3-diketo-5-methylthiopentyl-1-phosphate (DK-MTP-1-P) into the intermediate 2-hydroxy-3-keto-5-methylthiopentenyl-1-phosphate (HK-MTPenyl-1-P), which is then dephosphorylated to form the acireductone 1,2-dihydroxy-3-keto-5-methylthiopentene (DHK-MTPene). The polypeptide is Enolase-phosphatase E1 (Shewanella putrefaciens (strain CN-32 / ATCC BAA-453)).